We begin with the raw amino-acid sequence, 944 residues long: LPS-assembly protein LptD (944 aa).

Positions 1–33 (MALKSPAFRRKFPLLVTGGLLALQPLATSFVVA) are cleaved as a signal peptide. The segment at 52 to 102 (KATGNLPPRPVHPGAAAASSGAEAPGEVGEAQAEKPMLVTESKGRGLKSRS) is disordered. Over residues 64–82 (PGAAAASSGAEAPGEVGEA) the composition is skewed to low complexity.

The protein belongs to the LptD family. As to quaternary structure, component of the lipopolysaccharide transport and assembly complex. Interacts with LptE and LptA.

It localises to the cell outer membrane. Together with LptE, is involved in the assembly of lipopolysaccharide (LPS) at the surface of the outer membrane. This Pseudomonas entomophila (strain L48) protein is LPS-assembly protein LptD.